Reading from the N-terminus, the 943-residue chain is Coiled-coil and C2 domain-containing protein 1A (943 aa).

Thr91 is subject to Phosphothreonine. 2 disordered regions span residues 186 to 250 (NEAD…CSPL) and 300 to 337 (DLSR…VPQP). 2 stretches are compositionally biased toward low complexity: residues 195–206 (ASGKGAAAGHSH) and 229–238 (APSTTTPTSA). Ser248 carries the phosphoserine modification. Positions 304–319 (LPPPPDQLSPEPPLPA) are enriched in pro residues. Positions 339–385 (RNLLEALEQRMERYHVAAAQAKAKGDQRKARMHERIVKQYQDAIRAH) form a coiled coil. The disordered stretch occupies residues 430 to 483 (NHDEGSDDEEEETPKKQNTPAASTTQLKSSPSKAPPSGPAPAGKAAPKGTSNRA). At Ser435 the chain carries Phosphoserine. A compositionally biased stretch (polar residues) spans 445–456 (KQNTPAASTTQL). Over residues 469–478 (APAGKAAPKG) the composition is skewed to low complexity. Residues 477–510 (KGTSNRAQQQLAFLEGRKKQLLQAALRAKQKNDV) are a coiled coil. The region spanning 630–764 (RFEQRTFSVI…ETACEVHEIL (135 aa)) is the C2 domain.

The protein belongs to the CC2D1 family. In terms of tissue distribution, highly expressed in brain, expression is enriched in the gray matter and strongest in the olfactory bulb.

Its subcellular location is the cytoplasm. The protein localises to the nucleus. It localises to the cytoskeleton. It is found in the microtubule organizing center. The protein resides in the centrosome. Functionally, transcription factor that binds specifically to the DRE (dual repressor element) and represses HTR1A gene transcription in neuronal cells. The combination of calcium and ATP specifically inactivates the binding with FRE. May play a role in the altered regulation of HTR1A associated with anxiety and major depression. Mediates HDAC-independent repression of HTR1A promoter in neuronal cell. Performs essential function in controlling functional maturation of synapses. In Mus musculus (Mouse), this protein is Coiled-coil and C2 domain-containing protein 1A (Cc2d1a).